The primary structure comprises 442 residues: Inhibitor of Apoptosis OPG037 (442 aa).

ANK repeat units follow at residues 67–96 (DGNYPLHIASKINNNRIVAMLLVHGADPNA), 100–131 (HNKTPLYYLSGTDDEVIERINLLVQYGAKINN), 203–233 (DGNTPLHIVCSKTVKYVDIINLLLPSTDVNK), 237–267 (FGDSPLTLLIKTLSPAHLINKLISTSNVITD), 292–321 (YDSTDFKMAVEVGSIRCVKYLLDNDIICED), and 323–347 (MYYAVLSEYETMVDYLLFNHFSVDS).

The protein belongs to the orthopoxvirus OPG037 family. As to quaternary structure, may interact with host caspase-9-Apaf-1 complex.

It is found in the host cytoplasm. In terms of biological role, inhibits host apoptosis. Acts by associating with host apoptosome. The protein is Inhibitor of Apoptosis OPG037 (OPG037) of Monkeypox virus.